Here is a 150-residue protein sequence, read N- to C-terminus: S-protein homolog 24 (150 aa).

Asn122 is a glycosylation site (N-linked (GlcNAc...) asparagine).

The protein belongs to the plant self-incompatibility (S1) protein family.

Its subcellular location is the secreted. The chain is S-protein homolog 24 from Arabidopsis thaliana (Mouse-ear cress).